The following is a 190-amino-acid chain: MATTSDFRNGLCIEFNNDLYTIVEFQHVKPGKGGAFVRTKLKSLTNGKVIDNTFNSGVKITTARIERKTYQFLYKDGAGYHLMDNNTFEQLDLDEKAIQNPLLIKEGQELDVLFHQETGNFIGCELPPFVELKVTYTEPGLKGDTATRALKPATLETGLQIQVPLFIDNDEIIKIDTRTIAYVERVKTDI.

It belongs to the elongation factor P family.

The protein localises to the cytoplasm. It participates in protein biosynthesis; polypeptide chain elongation. In terms of biological role, involved in peptide bond synthesis. Stimulates efficient translation and peptide-bond synthesis on native or reconstituted 70S ribosomes in vitro. Probably functions indirectly by altering the affinity of the ribosome for aminoacyl-tRNA, thus increasing their reactivity as acceptors for peptidyl transferase. The sequence is that of Elongation factor P from Amoebophilus asiaticus (strain 5a2).